The primary structure comprises 66 residues: Vesicular acetylcholine transporter (66 aa).

The chain crosses the membrane as a helical span at residues 1–15 (GMGLANLLYAPVLLL). The Cytoplasmic segment spans residues 16–66 (LRNVGLLTRSRSERDVLLDEPPQGLYDAVRLRERPVSGQDGEPRSPPGPFD). The tract at residues 43–66 (AVRLRERPVSGQDGEPRSPPGPFD) is disordered.

Belongs to the major facilitator superfamily. Vesicular transporter family. As to quaternary structure, interacts with SEC14L1.

The protein localises to the cytoplasmic vesicle. Its subcellular location is the secretory vesicle. It is found in the synaptic vesicle membrane. The catalysed reaction is acetylcholine(out) + 2 H(+)(in) = acetylcholine(in) + 2 H(+)(out). It catalyses the reaction choline(in) + 2 H(+)(out) = choline(out) + 2 H(+)(in). The enzyme catalyses serotonin(in) + 2 H(+)(out) = serotonin(out) + 2 H(+)(in). In terms of biological role, electrogenic antiporter that exchanges one cholinergic neurotransmitter, acetylcholine or choline, with two intravesicular protons across the membrane of synaptic vesicles. Uses the electrochemical proton gradient established by the V-type proton-pump ATPase to store neurotransmitters inside the vesicles prior to their release via exocytosis. Determines cholinergic vesicular quantal size at presynaptic nerve terminals in developing neuro-muscular junctions with an impact on motor neuron differentiation and innervation pattern. Part of forebrain cholinergic system, regulates hippocampal synapse transmissions that underlie spatial memory formation. Can transport serotonin. The sequence is that of Vesicular acetylcholine transporter (SLC18A3) from Macaca fuscata fuscata (Japanese macaque).